Here is a 362-residue protein sequence, read N- to C-terminus: Ribosomal RNA large subunit methyltransferase M (362 aa).

S-adenosyl-L-methionine is bound by residues Ser-187, 220–223 (CPGG), Asp-239, Asp-259, and Asp-276. Lys-305 functions as the Proton acceptor in the catalytic mechanism.

The protein belongs to the class I-like SAM-binding methyltransferase superfamily. RNA methyltransferase RlmE family. RlmM subfamily. In terms of assembly, monomer.

It is found in the cytoplasm. The enzyme catalyses cytidine(2498) in 23S rRNA + S-adenosyl-L-methionine = 2'-O-methylcytidine(2498) in 23S rRNA + S-adenosyl-L-homocysteine + H(+). Functionally, catalyzes the 2'-O-methylation at nucleotide C2498 in 23S rRNA. The protein is Ribosomal RNA large subunit methyltransferase M of Shewanella frigidimarina (strain NCIMB 400).